Here is a 579-residue protein sequence, read N- to C-terminus: 3-hydroxy-3-methylglutaryl-coenzyme A reductase (579 aa).

The segment at Met1 to Ser22 is disordered. 2 helical membrane-spanning segments follow: residues Leu36 to Leu56 and Ala80 to Val100. Positions Gln101–Asp153 are linker. The catalytic stretch occupies residues Asp154 to Val579. Glu247 functions as the Charge relay system in the catalytic mechanism. An N-linked (GlcNAc...) asparagine glycan is attached at Asn311. Catalysis depends on charge relay system residues Lys379 and Asp455. A helical transmembrane segment spans residues Leu524–Leu544. The Proton donor role is filled by His553. Positions Lys555 to Val579 are disordered. The N-linked (GlcNAc...) asparagine glycan is linked to Asn557. Residues Glu570 to Val579 are compositionally biased toward basic and acidic residues.

Belongs to the HMG-CoA reductase family.

The protein resides in the endoplasmic reticulum membrane. The catalysed reaction is (R)-mevalonate + 2 NADP(+) + CoA = (3S)-3-hydroxy-3-methylglutaryl-CoA + 2 NADPH + 2 H(+). It functions in the pathway metabolic intermediate biosynthesis; (R)-mevalonate biosynthesis; (R)-mevalonate from acetyl-CoA: step 3/3. Functionally, catalyzes the synthesis of mevalonate. The specific precursor of all isoprenoid compounds present in plants. In Zea mays (Maize), this protein is 3-hydroxy-3-methylglutaryl-coenzyme A reductase (HMGR).